A 71-amino-acid chain; its full sequence is Antitoxin VapB22 (71 aa).

It belongs to the phD/YefM antitoxin family.

Its function is as follows. Antitoxin component of a type II toxin-antitoxin (TA) system. Upon expression in M.smegmatis neutralizes the effect of cognate toxin VapC22. The protein is Antitoxin VapB22 (vapB22) of Mycobacterium tuberculosis (strain ATCC 25618 / H37Rv).